The chain runs to 562 residues: Dihydroxy-acid dehydratase (562 aa).

A [2Fe-2S] cluster-binding site is contributed by Cys51. Asp83 is a binding site for Mg(2+). Cys124 contributes to the [2Fe-2S] cluster binding site. Residues Asp125 and Lys126 each coordinate Mg(2+). Lys126 is subject to N6-carboxylysine. Cys196 contributes to the [2Fe-2S] cluster binding site. Mg(2+) is bound at residue Glu448. Ser474 (proton acceptor) is an active-site residue.

This sequence belongs to the IlvD/Edd family. In terms of assembly, homodimer. It depends on [2Fe-2S] cluster as a cofactor. Mg(2+) serves as cofactor.

It catalyses the reaction (2R)-2,3-dihydroxy-3-methylbutanoate = 3-methyl-2-oxobutanoate + H2O. The enzyme catalyses (2R,3R)-2,3-dihydroxy-3-methylpentanoate = (S)-3-methyl-2-oxopentanoate + H2O. Its pathway is amino-acid biosynthesis; L-isoleucine biosynthesis; L-isoleucine from 2-oxobutanoate: step 3/4. It participates in amino-acid biosynthesis; L-valine biosynthesis; L-valine from pyruvate: step 3/4. Functions in the biosynthesis of branched-chain amino acids. Catalyzes the dehydration of (2R,3R)-2,3-dihydroxy-3-methylpentanoate (2,3-dihydroxy-3-methylvalerate) into 2-oxo-3-methylpentanoate (2-oxo-3-methylvalerate) and of (2R)-2,3-dihydroxy-3-methylbutanoate (2,3-dihydroxyisovalerate) into 2-oxo-3-methylbutanoate (2-oxoisovalerate), the penultimate precursor to L-isoleucine and L-valine, respectively. In Pyrobaculum aerophilum (strain ATCC 51768 / DSM 7523 / JCM 9630 / CIP 104966 / NBRC 100827 / IM2), this protein is Dihydroxy-acid dehydratase.